The chain runs to 141 residues: HTH-type transcriptional repressor NsrR (141 aa).

The HTH rrf2-type domain occupies 2-129 (QLTSFTDYGL…DNYTLADLVE (128 aa)). A DNA-binding region (H-T-H motif) is located at residues 28–51 (ISEVTEVYGVSRNHMVKIINQLSR). [2Fe-2S] cluster contacts are provided by Cys-91, Cys-96, and Cys-102.

The cofactor is [2Fe-2S] cluster.

Functionally, nitric oxide-sensitive repressor of genes involved in protecting the cell against nitrosative stress. May require iron for activity. The sequence is that of HTH-type transcriptional repressor NsrR from Salmonella choleraesuis (strain SC-B67).